Consider the following 222-residue polypeptide: uncharacterized protein (222 aa).

A run of 2 helical transmembrane segments spans residues 22-42 and 189-209; these read IRVI…FLYI and AICL…FCLV.

It localises to the cell membrane. This is an uncharacterized protein from Escherichia coli (strain K12).